The primary structure comprises 629 residues: Probable potassium transport system protein Kup 3 (629 aa).

12 helical membrane passes run 20–40, 54–74, 106–126, 143–163, 171–191, 212–232, 253–273, 291–311, 343–363, 372–392, 400–420, and 425–445; these read LSLS…LYTF, VTTI…IASV, PFII…GTIT, PSLK…LFAI, IGKA…ILGA, FLFS…LCVT, WFGL…ALVL, FLLP…QAII, IYIG…IIGF, AYGI…FIAL, IIKS…FFAA, and FING…MMYI.

The protein belongs to the HAK/KUP transporter (TC 2.A.72) family.

It is found in the cell inner membrane. The enzyme catalyses K(+)(in) + H(+)(in) = K(+)(out) + H(+)(out). In terms of biological role, transport of potassium into the cell. Likely operates as a K(+):H(+) symporter. The protein is Probable potassium transport system protein Kup 3 of Legionella pneumophila (strain Corby).